The following is a 369-amino-acid chain: tRNA pseudouridine synthase D (369 aa).

The active-site Nucleophile is D80. Positions 156-318 (GIPNWFGEQR…LKQERRALRL (163 aa)) constitute a TRUD domain.

Belongs to the pseudouridine synthase TruD family.

It catalyses the reaction uridine(13) in tRNA = pseudouridine(13) in tRNA. In terms of biological role, responsible for synthesis of pseudouridine from uracil-13 in transfer RNAs. The protein is tRNA pseudouridine synthase D of Xanthomonas oryzae pv. oryzae (strain KACC10331 / KXO85).